The chain runs to 71 residues: Biotinylated protein TB7.3 (71 aa).

A Biotinyl-binding domain is found at 2-71 (AEDVRAEIVA…QAGDLIAVIS (70 aa)). The residue at position 37 (Lys37) is an N6-biotinyllysine.

The protein is Biotinylated protein TB7.3 of Mycobacterium bovis (strain ATCC BAA-935 / AF2122/97).